Consider the following 146-residue polypeptide: Large ribosomal subunit protein uL15 (146 aa).

A disordered region spans residues 1 to 51 (MKLHELKPAKGSRKVRNRVGRGTSSGNGKTSGRGQKGQKARSGGGVRLGFE). Residues 10–19 (KGSRKVRNRV) show a composition bias toward basic residues. 2 stretches are compositionally biased toward gly residues: residues 23–35 (TSSG…GRGQ) and 42–51 (SGGGVRLGFE).

Belongs to the universal ribosomal protein uL15 family. Part of the 50S ribosomal subunit.

Its function is as follows. Binds to the 23S rRNA. The protein is Large ribosomal subunit protein uL15 of Streptococcus equi subsp. equi (strain 4047).